Here is a 417-residue protein sequence, read N- to C-terminus: Aromatic-amino-acid aminotransferase 1 (417 aa).

Residue Lys258 is modified to N6-(pyridoxal phosphate)lysine.

It belongs to the class-I pyridoxal-phosphate-dependent aminotransferase family. In terms of assembly, homodimer. Pyridoxal 5'-phosphate serves as cofactor.

The enzyme catalyses an aromatic L-alpha-amino acid + 2-oxoglutarate = an aromatic oxo-acid + L-glutamate. Its function is as follows. Catalyzes the transamination of phenylalanine, tyrosine and tryptophan. Shows virtually no activity towards aspartic acid, alanine, valine or isoleucine. The protein is Aromatic-amino-acid aminotransferase 1 of Thermococcus litoralis (strain ATCC 51850 / DSM 5473 / JCM 8560 / NS-C).